A 231-amino-acid polypeptide reads, in one-letter code: Large ribosomal subunit protein uL1 (231 aa).

The protein belongs to the universal ribosomal protein uL1 family. In terms of assembly, part of the 50S ribosomal subunit.

Binds directly to 23S rRNA. The L1 stalk is quite mobile in the ribosome, and is involved in E site tRNA release. Functionally, protein L1 is also a translational repressor protein, it controls the translation of the L11 operon by binding to its mRNA. This chain is Large ribosomal subunit protein uL1, found in Janthinobacterium sp. (strain Marseille) (Minibacterium massiliensis).